We begin with the raw amino-acid sequence, 200 residues long: Protein Rv0461 (200 aa).

Residues 47–67 form a disordered region; sequence DRAGKSWPGSTPKPQEDPVGV. Helical transmembrane passes span 102–122, 134–154, and 159–179; these read FVLV…SLFY, VFVV…LALV, and LITA…AAAA.

Its subcellular location is the cell membrane. This is Protein Rv0461 from Mycobacterium tuberculosis (strain ATCC 25618 / H37Rv).